We begin with the raw amino-acid sequence, 308 residues long: Oxygen-dependent coproporphyrinogen-III oxidase (308 aa).

Substrate is bound at residue Ser100. His104 and His114 together coordinate a divalent metal cation. His114 acts as the Proton donor in catalysis. 116–118 (NFR) provides a ligand contact to substrate. His153 and His183 together coordinate a divalent metal cation. An important for dimerization region spans residues 248–283 (YVEFNLVFDRGTIFGLQSGGRTESILSSMPPMATWK). Position 266-268 (266-268 (GGR)) interacts with substrate.

The protein belongs to the aerobic coproporphyrinogen-III oxidase family. As to quaternary structure, homodimer. Requires a divalent metal cation as cofactor.

The protein localises to the cytoplasm. The enzyme catalyses coproporphyrinogen III + O2 + 2 H(+) = protoporphyrinogen IX + 2 CO2 + 2 H2O. It functions in the pathway porphyrin-containing compound metabolism; protoporphyrin-IX biosynthesis; protoporphyrinogen-IX from coproporphyrinogen-III (O2 route): step 1/1. Its function is as follows. Involved in the heme biosynthesis. Catalyzes the aerobic oxidative decarboxylation of propionate groups of rings A and B of coproporphyrinogen-III to yield the vinyl groups in protoporphyrinogen-IX. This Francisella philomiragia subsp. philomiragia (strain ATCC 25017 / CCUG 19701 / FSC 153 / O#319-036) protein is Oxygen-dependent coproporphyrinogen-III oxidase.